The chain runs to 348 residues: Benzoate 1,2-dioxygenase electron transfer component (348 aa).

The 96-residue stretch at H14–S109 folds into the 2Fe-2S ferredoxin-type domain. Residues C51, C56, C59, and C93 each coordinate [2Fe-2S] cluster. Residues V111–N348 form a ferredoxin-reductase region. An FAD-binding FR-type domain is found at I116–R217.

It belongs to the bacterial ring-hydroxylating dioxygenase ferredoxin reductase family. As to quaternary structure, this dioxygenase system consists of three proteins: the two subunits of the hydroxylase component (BenA and BenB), and an electron transfer component (BenC). The cofactor is FAD. [2Fe-2S] cluster is required as a cofactor.

It carries out the reaction 2 reduced [2Fe-2S]-[ferredoxin] + NAD(+) + H(+) = 2 oxidized [2Fe-2S]-[ferredoxin] + NADH. It participates in xenobiotic degradation; toluene degradation. In terms of biological role, electron transfer component of benzoate 1,2-dioxygenase system. The chain is Benzoate 1,2-dioxygenase electron transfer component (benC) from Acinetobacter baylyi (strain ATCC 33305 / BD413 / ADP1).